A 617-amino-acid polypeptide reads, in one-letter code: Chaperone protein HscA homolog (617 aa).

This sequence belongs to the heat shock protein 70 family.

Functionally, probable chaperone. Has a low intrinsic ATPase activity which is markedly stimulated by HscB. The protein is Chaperone protein HscA homolog of Vibrio vulnificus (strain CMCP6).